A 284-amino-acid polypeptide reads, in one-letter code: Proteasome subunit beta (284 aa).

A propeptide spans 1-56 (MSPMESSSTRFPGQALPAAYLTPGSSSFTDFLRVAAPELMPGSRPVPDGAVEAPHG) (removed in mature form; by autocatalysis). Thr-57 (nucleophile) is an active-site residue.

The protein belongs to the peptidase T1B family. The 20S proteasome core is composed of 14 alpha and 14 beta subunits that assemble into four stacked heptameric rings, resulting in a barrel-shaped structure. The two inner rings, each composed of seven catalytic beta subunits, are sandwiched by two outer rings, each composed of seven alpha subunits. The catalytic chamber with the active sites is on the inside of the barrel. Has a gated structure, the ends of the cylinder being occluded by the N-termini of the alpha-subunits. Is capped by the proteasome-associated ATPase, ARC.

It is found in the cytoplasm. The enzyme catalyses Cleavage of peptide bonds with very broad specificity.. The protein operates within protein degradation; proteasomal Pup-dependent pathway. With respect to regulation, the formation of the proteasomal ATPase ARC-20S proteasome complex, likely via the docking of the C-termini of ARC into the intersubunit pockets in the alpha-rings, may trigger opening of the gate for substrate entry. Interconversion between the open-gate and close-gate conformations leads to a dynamic regulation of the 20S proteasome proteolysis activity. Component of the proteasome core, a large protease complex with broad specificity involved in protein degradation. This chain is Proteasome subunit beta, found in Saccharopolyspora erythraea (strain ATCC 11635 / DSM 40517 / JCM 4748 / NBRC 13426 / NCIMB 8594 / NRRL 2338).